The primary structure comprises 559 residues: Oxygen-dependent choline dehydrogenase (559 aa).

4-33 (DYIIIGAGSAGNVLAARLTEESDVSVLLLE) is a binding site for FAD. The disordered stretch occupies residues 182–202 (EGFGPMDRTVTPKGRRASTAR). Residue histidine 471 is the Proton acceptor of the active site.

The protein belongs to the GMC oxidoreductase family. Requires FAD as cofactor.

It catalyses the reaction choline + A = betaine aldehyde + AH2. It carries out the reaction betaine aldehyde + NAD(+) + H2O = glycine betaine + NADH + 2 H(+). Its pathway is amine and polyamine biosynthesis; betaine biosynthesis via choline pathway; betaine aldehyde from choline (cytochrome c reductase route): step 1/1. Its function is as follows. Involved in the biosynthesis of the osmoprotectant glycine betaine. Catalyzes the oxidation of choline to betaine aldehyde and betaine aldehyde to glycine betaine at the same rate. In Pectobacterium atrosepticum (strain SCRI 1043 / ATCC BAA-672) (Erwinia carotovora subsp. atroseptica), this protein is Oxygen-dependent choline dehydrogenase.